We begin with the raw amino-acid sequence, 225 residues long: Ribonuclease T (225 aa).

Residues 1–21 form a disordered region; the sequence is MSEDHFDEEHEGHGGGGGSRH. The 175-residue stretch at 33–207 folds into the Exonuclease domain; that stretch reads VVVDVETGGF…YDTEKTAELF (175 aa). Residues aspartate 36, glutamate 38, histidine 194, and aspartate 199 each coordinate Mg(2+). Catalysis depends on histidine 194, which acts as the Proton donor/acceptor.

The protein belongs to the RNase T family. In terms of assembly, homodimer. It depends on Mg(2+) as a cofactor.

Functionally, trims short 3' overhangs of a variety of RNA species, leaving a one or two nucleotide 3' overhang. Responsible for the end-turnover of tRNA: specifically removes the terminal AMP residue from uncharged tRNA (tRNA-C-C-A). Also appears to be involved in tRNA biosynthesis. This chain is Ribonuclease T, found in Pseudomonas syringae pv. tomato (strain ATCC BAA-871 / DC3000).